Here is a 283-residue protein sequence, read N- to C-terminus: Pantothenate synthetase (283 aa).

ATP is bound at residue 30–37; sequence MGYYHSGH. The active-site Proton donor is His37. Gln61 serves as a coordination point for (R)-pantoate. Gln61 lines the beta-alanine pocket. 147–150 serves as a coordination point for ATP; sequence GQKD. Gln153 is a (R)-pantoate binding site. Residues Val176 and 184–187 contribute to the ATP site; that span reads MSSR.

Belongs to the pantothenate synthetase family. As to quaternary structure, homodimer.

It localises to the cytoplasm. It carries out the reaction (R)-pantoate + beta-alanine + ATP = (R)-pantothenate + AMP + diphosphate + H(+). The protein operates within cofactor biosynthesis; (R)-pantothenate biosynthesis; (R)-pantothenate from (R)-pantoate and beta-alanine: step 1/1. Catalyzes the condensation of pantoate with beta-alanine in an ATP-dependent reaction via a pantoyl-adenylate intermediate. The protein is Pantothenate synthetase of Nitratidesulfovibrio vulgaris (strain DSM 19637 / Miyazaki F) (Desulfovibrio vulgaris).